We begin with the raw amino-acid sequence, 255 residues long: Geranylgeranylglyceryl phosphate synthase (255 aa).

Asp34 and Thr64 together coordinate Mg(2+). Residues 182–188, 213–214, and 235–236 contribute to the sn-glycerol 1-phosphate site; these read YLEAGSG, GG, and GN.

This sequence belongs to the GGGP/HepGP synthase family. Group II subfamily. Mg(2+) is required as a cofactor.

Its subcellular location is the cytoplasm. The catalysed reaction is sn-glycerol 1-phosphate + (2E,6E,10E)-geranylgeranyl diphosphate = sn-3-O-(geranylgeranyl)glycerol 1-phosphate + diphosphate. It participates in membrane lipid metabolism; glycerophospholipid metabolism. Prenyltransferase that catalyzes the transfer of the geranylgeranyl moiety of geranylgeranyl diphosphate (GGPP) to the C3 hydroxyl of sn-glycerol-1-phosphate (G1P). This reaction is the first ether-bond-formation step in the biosynthesis of archaeal membrane lipids. The sequence is that of Geranylgeranylglyceryl phosphate synthase from Saccharolobus solfataricus (strain ATCC 35092 / DSM 1617 / JCM 11322 / P2) (Sulfolobus solfataricus).